The following is a 115-amino-acid chain: NADH-ubiquinone oxidoreductase chain 3 (115 aa).

3 helical membrane passes run 3–23, 55–75, and 84–104; these read LIMVISINIILSSILILVAFW, FFLVAITFLLFDLEIALLLPI, and INTMLLAAFILVSILALGLAY.

The protein belongs to the complex I subunit 3 family. In terms of assembly, core subunit of respiratory chain NADH dehydrogenase (Complex I) which is composed of 45 different subunits. Interacts with TMEM186. Interacts with TMEM242.

It localises to the mitochondrion inner membrane. The enzyme catalyses a ubiquinone + NADH + 5 H(+)(in) = a ubiquinol + NAD(+) + 4 H(+)(out). Core subunit of the mitochondrial membrane respiratory chain NADH dehydrogenase (Complex I) which catalyzes electron transfer from NADH through the respiratory chain, using ubiquinone as an electron acceptor. Essential for the catalytic activity of complex I. The sequence is that of NADH-ubiquinone oxidoreductase chain 3 from Scotinomys teguina (Alston's brown mouse).